The following is a 192-amino-acid chain: Shikimate kinase (192 aa).

26 to 31 (ASGKSS) serves as a coordination point for ATP. Position 30 (serine 30) interacts with Mg(2+). 3 residues coordinate substrate: aspartate 48, arginine 72, and glycine 94. Residue arginine 132 participates in ATP binding. A substrate-binding site is contributed by arginine 151.

It belongs to the shikimate kinase family. As to quaternary structure, monomer. It depends on Mg(2+) as a cofactor.

The protein localises to the cytoplasm. It catalyses the reaction shikimate + ATP = 3-phosphoshikimate + ADP + H(+). It functions in the pathway metabolic intermediate biosynthesis; chorismate biosynthesis; chorismate from D-erythrose 4-phosphate and phosphoenolpyruvate: step 5/7. Its function is as follows. Catalyzes the specific phosphorylation of the 3-hydroxyl group of shikimic acid using ATP as a cosubstrate. The chain is Shikimate kinase from Prochlorococcus marinus (strain MIT 9313).